The chain runs to 381 residues: Neuropeptide Y receptor type 2 (381 aa).

The interval 1-37 is disordered; the sequence is MGPVGAEADENQTVEVKVEPYGPGHTTPRGELPPDPE. At 1–51 the chain is on the extracellular side; it reads MGPVGAEADENQTVEVKVEPYGPGHTTPRGELPPDPEPELIDSTKLVEVQV. Asn-11 is a glycosylation site (N-linked (GlcNAc...) asparagine). Residues 52–72 traverse the membrane as a helical segment; that stretch reads ILILAYCSIILLGVVGNSLVI. Residues 73–86 are Cytoplasmic-facing; it reads HVVIKFKSMRTVTN. A helical membrane pass occupies residues 87-107; that stretch reads FFIANLAVADLLVNTLCLPFT. At 108 to 124 the chain is on the extracellular side; it reads LTYTLMGEWKMGPVLCH. Cys-123 and Cys-203 are disulfide-bonded. The helical transmembrane segment at 125-145 threads the bilayer; sequence LVPYAQGLAVQVSTITLTVIA. Over 146–165 the chain is Cytoplasmic; that stretch reads LDRHRCIVYHLESKISKRIS. Residues 166 to 186 traverse the membrane as a helical segment; it reads FLIIGLAWGISALLASPLAIF. Residues 187–216 are Extracellular-facing; the sequence is REYSLIEIIPDFEIVACTEKWPGEEKSVYG. A helical membrane pass occupies residues 217 to 237; sequence TVYSLSTLLILYVLPLGIISF. The Cytoplasmic segment spans residues 238-268; the sequence is SYTRIWSKLRNHVSPGAASDHYHQRRHKMTK. Residues 269–289 traverse the membrane as a helical segment; the sequence is MLVCVVVVFAVSWLPLHAFQL. Residues 290–304 lie on the Extracellular side of the membrane; that stretch reads AVDIDSHVLDLKEYK. The chain crosses the membrane as a helical span at residues 305–325; it reads LIFTVFHIIAMCSTFANPLLY. Over 326–381 the chain is Cytoplasmic; it reads GWMNSNYRKAFLSAFRCEQRLDAIHSEVSMTFKAKKNLEVKKNNGPTDSFSEATNV. Cys-342 carries the S-palmitoyl cysteine lipid modification.

This sequence belongs to the G-protein coupled receptor 1 family.

Its subcellular location is the cell membrane. Functionally, receptor for neuropeptide Y and peptide YY. In Mus musculus (Mouse), this protein is Neuropeptide Y receptor type 2 (Npy2r).